The chain runs to 236 residues: Peptidase E (236 aa).

Active-site charge relay system residues include Ser-122, Asp-137, and His-159.

It belongs to the peptidase S51 family.

Its subcellular location is the cytoplasm. The enzyme catalyses Dipeptidase E catalyzes the hydrolysis of dipeptides Asp-|-Xaa. It does not act on peptides with N-terminal Glu, Asn or Gln, nor does it cleave isoaspartyl peptides.. In terms of biological role, hydrolyzes dipeptides containing N-terminal aspartate residues. May play a role in allowing the cell to use peptide aspartate to spare carbon otherwise required for the synthesis of the aspartate family of amino acids. This chain is Peptidase E, found in Shewanella oneidensis (strain ATCC 700550 / JCM 31522 / CIP 106686 / LMG 19005 / NCIMB 14063 / MR-1).